We begin with the raw amino-acid sequence, 142 residues long: Salivary protein 15a (142 aa).

The signal sequence occupies residues 1–20 (MKYLGLALISAVFLIGACQA). 3 disulfides stabilise this stretch: Cys27–Cys44, Cys40–Cys108, and Cys91–Cys117.

It belongs to the PBP/GOBP family. Female salivary gland (at protein level).

It localises to the secreted. Inhibits contact coagulation pathway activation in the host by sequestering anionic polymers, such as polyphosphate and dextran sulfate, and thus blocking interaction of protein components of the pathway with negatively charged surfaces. Inhibits dextran sulfate-mediated autoactivation of host coagulation factor XII (F12). Inhibits dextran sulfate-mediated autoactivation of host factor XI (F11). Inhibits polyphosphate-mediated activation of host F11 by thrombin (F2). May inhibit dextran sulfate-mediated bradykinin generation in host plasma. The sequence is that of Salivary protein 15a from Phlebotomus duboscqi (Sandfly).